The chain runs to 190 residues: Elongation factor P (190 aa).

The protein belongs to the elongation factor P family.

The protein resides in the cytoplasm. The protein operates within protein biosynthesis; polypeptide chain elongation. Functionally, involved in peptide bond synthesis. Stimulates efficient translation and peptide-bond synthesis on native or reconstituted 70S ribosomes in vitro. Probably functions indirectly by altering the affinity of the ribosome for aminoacyl-tRNA, thus increasing their reactivity as acceptors for peptidyl transferase. This Bartonella bacilliformis (strain ATCC 35685 / KC583 / Herrer 020/F12,63) protein is Elongation factor P.